The following is an 806-amino-acid chain: MDFINIEKKWQEFWWKNKSFEPKDDFNLPKKYILSMLPYPSGEIHMGHVRNYTIGDALARYYRLHHYNVLHPMGFDSFGMPAENAAIKHGIHPKTWTYENIEAMQKEFEALGFSFSKNREFATSDPDYTKFEQQFFIDLWEKGLIYRKKAMLNWCPNDKTVLANEQVIDGRCWRCDTEVIQKELYQYYLKITNYAEELLKDLETLENHWPSQVLTMQKNWIGKSSGLQFGFKIADECLKACNNIQEIEVFTTRADTIYGVTYIAIAPEHPLVEHAIKRVSQEDSKMIKAILNTTQRERALEKKGAFLGIYAIHPLTKQKIPVWVANFALANYGSGALMGVPACDERDFEFANLYHIPIKVITQSPQNLPHTKEEILKNSGEWSDLSSSVAREKIIAYFEKENLGKRVINYRLQDWGVSRQRYWGAPIPMIHCKHCGIVPETQLPVTLPEDIVIDGEGNPLEKHASWKFAQCPKCHKDALRETDTMDTFIQSSWYFLRYTTPKNQRENQAFDQNYLKYFMPVDTYIGGIEHAILHLLYARFFTKALRDLGYLHLDEPFKQLITQGMVLKDGAKMSKSKGNVVSPKEILKKYGADAVRLFILFAAPPAKELEWNDNALEGAHRFIKRLYDKANAITPTTSKPEFKEVGLNEAQKLARKKVYEALKKSHEIFNKAESAYAFNTLIASCMEALNALNAQSDEQILCEGYFVLLQILEPMIPHTAWELSERLFKRENFKPIEVDESALIEDFMTLGLTINGKRRAELKVNINASKEEIIILAKKELEKYLENASVKKEIYVPNKLVNFVTA.

A 'HIGH' region motif is present at residues Pro-38–His-48. A 'KMSKS' region motif is present at residues Lys-572–Ser-576. Residue Lys-575 participates in ATP binding.

This sequence belongs to the class-I aminoacyl-tRNA synthetase family.

Its subcellular location is the cytoplasm. The catalysed reaction is tRNA(Leu) + L-leucine + ATP = L-leucyl-tRNA(Leu) + AMP + diphosphate. The chain is Leucine--tRNA ligase from Helicobacter pylori (strain J99 / ATCC 700824) (Campylobacter pylori J99).